Consider the following 540-residue polypeptide: Zinc transporter ZIP5 (540 aa).

The signal sequence occupies residues 1–20; sequence MMGSPVSHLLAGFCVWVVLG. At 21–212 the chain is on the extracellular side; it reads WVGGSVPNLG…PAPPGDLLSA (192 aa). Asparagine 50 is a glycosylation site (N-linked (GlcNAc...) asparagine). The tract at residues 78–101 is disordered; it reads HGPLTGRAASPAADNSTHRPQNPE. The span at 90–101 shows a compositional bias: polar residues; the sequence is ADNSTHRPQNPE. Asparagine 160 carries N-linked (GlcNAc...) asparagine glycosylation. A helical membrane pass occupies residues 213-233; sequence LLQSALAVLLLSLPSPLSLLL. At 234-244 the chain is on the cytoplasmic side; the sequence is LRLLGPRLLRP. The chain crosses the membrane as a helical span at residues 245 to 265; it reads LLGFLGALAVGTLCGDALLHL. Residues 266–287 are Extracellular-facing; that stretch reads LPHAQEGRHAGPGGLPEKDLGP. A helical transmembrane segment spans residues 288–308; that stretch reads GLSVLGGLFLLFVLENMLGLL. Residues 309 to 444 lie on the Cytoplasmic side of the membrane; sequence RHRGLRPRCC…LLQSGLSFRR (136 aa). The disordered stretch occupies residues 324-377; the sequence is NLETRNLDPENGSGMALQPLQAAPEPGAQGQREKNSQHPPALAPPGHQGHSHGH. Phosphoserine is present on serine 336. Histidine 375 bears the Pros-methylhistidine mark. A helical membrane pass occupies residues 445–465; the sequence is LLLLSLVSGALGLGGAVLGVG. Residues 466-470 lie on the Extracellular side of the membrane; the sequence is LSLGP. The chain crosses the membrane as a helical span at residues 471–491; it reads VPLTPWVFGVTAGVFLYVALV. Topologically, residues 492-508 are cytoplasmic; that stretch reads DMLPALLRPPEPLPTPH. The chain crosses the membrane as a helical span at residues 509–529; it reads VLLQGLGLLLGGGLMLAITLL. The Extracellular portion of the chain corresponds to 530–540; the sequence is EERLLPVTTEG.

The protein belongs to the ZIP transporter (TC 2.A.5) family. In terms of assembly, homodimer. In terms of processing, methylated at His-375 by METTL9. N-Glycosylated. As to expression, expressed in liver, kidney, pancreas, small intestine, colon, spleen, fetal liver and fetal kidney.

Its subcellular location is the basolateral cell membrane. The enzyme catalyses Zn(2+)(in) = Zn(2+)(out). Uniporter that transports zinc(2+) into polarized cells of enterocytes, pancreatic acinar and endoderm cells across the basolateral membrane and participates, notably, in zinc excretion from the intestine by the uptake of zinc from the blood into the intestine. The transport mechanism is temperature- and concentration-dependent and saturable. In addition, is also a high affinity copper transporter in vitro. Also may regulate glucose-stimulated insulin secretion (GSIS) in islets primarily through the zinc-activated SIRT1-PPARGC1A axis. Could regulate the BMP/TGF-beta (bone morphogenetic protein/transforming growth factor-beta) signaling pathway and modulates extracellular matrix (ECM) proteins of the sclera. Plays a role in eye development. This chain is Zinc transporter ZIP5, found in Homo sapiens (Human).